A 175-amino-acid chain; its full sequence is Peptide deformylase (175 aa).

Residues C94 and H136 each contribute to the Fe cation site. The active site involves E137. H140 provides a ligand contact to Fe cation.

Belongs to the polypeptide deformylase family. The cofactor is Fe(2+).

It catalyses the reaction N-terminal N-formyl-L-methionyl-[peptide] + H2O = N-terminal L-methionyl-[peptide] + formate. Removes the formyl group from the N-terminal Met of newly synthesized proteins. Requires at least a dipeptide for an efficient rate of reaction. N-terminal L-methionine is a prerequisite for activity but the enzyme has broad specificity at other positions. This is Peptide deformylase from Brucella suis biovar 1 (strain 1330).